The sequence spans 193 residues: dITP/XTP pyrophosphatase (193 aa).

Ser-7–Lys-12 contacts substrate. Asp-65 functions as the Proton acceptor in the catalytic mechanism. Asp-65 is a Mg(2+) binding site. Residues Ser-66, Phe-144–Asp-147, Lys-167, and His-172–Arg-173 each bind substrate.

This sequence belongs to the HAM1 NTPase family. As to quaternary structure, homodimer. Mg(2+) serves as cofactor.

It catalyses the reaction XTP + H2O = XMP + diphosphate + H(+). The enzyme catalyses dITP + H2O = dIMP + diphosphate + H(+). It carries out the reaction ITP + H2O = IMP + diphosphate + H(+). In terms of biological role, pyrophosphatase that catalyzes the hydrolysis of nucleoside triphosphates to their monophosphate derivatives, with a high preference for the non-canonical purine nucleotides XTP (xanthosine triphosphate), dITP (deoxyinosine triphosphate) and ITP. Seems to function as a house-cleaning enzyme that removes non-canonical purine nucleotides from the nucleotide pool, thus preventing their incorporation into DNA/RNA and avoiding chromosomal lesions. The chain is dITP/XTP pyrophosphatase from Tropheryma whipplei (strain TW08/27) (Whipple's bacillus).